Consider the following 424-residue polypeptide: 3-isopropylmalate dehydratase large subunit 1 (424 aa).

Residues C303, C363, and C366 each contribute to the [4Fe-4S] cluster site.

It belongs to the aconitase/IPM isomerase family. LeuC type 2 subfamily. Heterodimer of LeuC and LeuD. [4Fe-4S] cluster is required as a cofactor.

The catalysed reaction is (2R,3S)-3-isopropylmalate = (2S)-2-isopropylmalate. It functions in the pathway amino-acid biosynthesis; L-leucine biosynthesis; L-leucine from 3-methyl-2-oxobutanoate: step 2/4. Functionally, catalyzes the isomerization between 2-isopropylmalate and 3-isopropylmalate, via the formation of 2-isopropylmaleate. The polypeptide is 3-isopropylmalate dehydratase large subunit 1 (Pyrococcus furiosus (strain ATCC 43587 / DSM 3638 / JCM 8422 / Vc1)).